The primary structure comprises 356 residues: Cyanide hydratase (356 aa).

The region spanning 6-285 (YKAAAVTSEP…DGLLFVDIDL (280 aa)) is the CN hydrolase domain. Glutamate 46 (proton acceptor) is an active-site residue. Lysine 128 is a catalytic residue. Cysteine 163 serves as the catalytic Nucleophile.

The protein belongs to the carbon-nitrogen hydrolase superfamily. Nitrilase family. As to quaternary structure, oligomer of dimers, forming left-handed helical fibers.

The enzyme catalyses formamide = hydrogen cyanide + H2O. Its function is as follows. Catalyzes the hydration of cyanide to formamide. Degradation of cyanide may be important for plant pathogenic fungi in infection of cyanogenic plants. This chain is Cyanide hydratase, found in Leptosphaeria maculans (Blackleg fungus).